A 52-amino-acid chain; its full sequence is Small, acid-soluble spore protein K (52 aa).

A disordered region spans residues 1–52 (MGKQAEFWSESKNNSKIDGQPKAKSRFASKRPNGTINTHPQERMRAANQQEE).

The protein belongs to the SspK family.

It is found in the spore core. In Bacillus anthracis (strain A0248), this protein is Small, acid-soluble spore protein K.